A 716-amino-acid chain; its full sequence is Antibacterial effector protein Tle3 (716 aa).

A disordered region spans residues Pro-68 to Leu-87.

In terms of assembly, interacts in the cytoplasm with the adapter protein Tla3. Interacts in the periplasm with the immunity protein Tli3.

The protein resides in the secreted. Its subcellular location is the host periplasm. With respect to regulation, neutralized by the immunity protein Tli3 in the periplasm of P.aeruginosa cells. In terms of biological role, antibacterial effector. Is toxic once delivered in the periplasm of prey bacteria. The chain is Antibacterial effector protein Tle3 from Pseudomonas aeruginosa (strain ATCC 15692 / DSM 22644 / CIP 104116 / JCM 14847 / LMG 12228 / 1C / PRS 101 / PAO1).